Reading from the N-terminus, the 162-residue chain is Caveolin-2 (162 aa).

At 1–86 the chain is on the cytoplasmic side; that stretch reads MGLETEKADV…FEVSKYVIYK (86 aa). At Tyr19 the chain carries Phosphotyrosine; by SRC. 2 positions are modified to phosphoserine: Ser20 and Ser23. The residue at position 27 (Tyr27) is a Phosphotyrosine; by SRC. The helical intramembrane region spans 87–107; that stretch reads FLTLFLAIPLAFAAGILFATL. The Cytoplasmic segment spans residues 108 to 162; it reads SCLHIWIVMPFVKTCLMVLPSVQTIWKSVTDVVIAPLCASVGRSFSSVSMQLSRD.

Belongs to the caveolin family. As to quaternary structure, monomer or homodimer. Interacts with CAV1; the interaction forms a stable heterooligomeric complex that is required for targeting to lipid rafts and for caveolae formation. Tyrosine phosphorylated forms do not form heterooligomers with the Tyr-19-phosphorylated form existing as a monomer or dimer, and the Tyr-27-form as a monomer only. Interacts (tyrosine phosphorylated form) with the SH2 domain-containing proteins, RASA1, NCK1 and SRC. Interacts (tyrosine phosphorylated form) with INSR, the interaction (Tyr-27-phosphorylated form) is increased on insulin stimulation. Interacts (Tyr-19 phosphorylated form) with MAPK1 (phosphorylated form); the interaction, promoted by insulin, leads to nuclear location and MAPK1 activation. Interacts with STAT3; the interaction is increased on insulin-induced tyrosine phosphorylation leading to STAT activation. Phosphorylated on serine and tyrosine residues. CAV1 promotes phosphorylation on Ser-23 which then targets the complex to the plasma membrane, lipid rafts and caveolae. Phosphorylation on both Tyr-19 and Tyr-27 is required for insulin-induced 'Ser-727' phosphorylation of STAT3 and its activation. Phosphorylation on Tyr-19 is required for insulin-induced phosphorylation of MAPK1 and DNA binding of STAT3. Tyrosine phosphorylation is induced by both EGF and insulin.

Its subcellular location is the nucleus. It is found in the cytoplasm. The protein localises to the golgi apparatus membrane. It localises to the cell membrane. The protein resides in the membrane. Its subcellular location is the caveola. Its function is as follows. May act as a scaffolding protein within caveolar membranes. Interacts directly with G-protein alpha subunits and can functionally regulate their activity. Acts as an accessory protein in conjunction with CAV1 in targeting to lipid rafts and driving caveolae formation. Positive regulator of cellular mitogenesis of the MAPK signaling pathway. Required for the insulin-stimulated nuclear translocation and activation of MAPK1 and STAT3, and the subsequent regulation of cell cycle progression. In Rhinolophus ferrumequinum (Greater horseshoe bat), this protein is Caveolin-2 (CAV2).